We begin with the raw amino-acid sequence, 1368 residues long: DNA-directed RNA polymerase subunit beta (1368 aa).

It belongs to the RNA polymerase beta chain family. The RNAP catalytic core consists of 2 alpha, 1 beta, 1 beta' and 1 omega subunit. When a sigma factor is associated with the core the holoenzyme is formed, which can initiate transcription.

The enzyme catalyses RNA(n) + a ribonucleoside 5'-triphosphate = RNA(n+1) + diphosphate. Functionally, DNA-dependent RNA polymerase catalyzes the transcription of DNA into RNA using the four ribonucleoside triphosphates as substrates. This Desulfosudis oleivorans (strain DSM 6200 / JCM 39069 / Hxd3) (Desulfococcus oleovorans) protein is DNA-directed RNA polymerase subunit beta.